The chain runs to 346 residues: MDFTIFPPEFNSLNIQGSARPFLVAANAWKNLSNELSYAASRFESEINGLITSWRGPSSTIMAAAVAPFRAWIVTTASLAELVADHISVVAGAYEAAHAAHVPLPVIETNRLTRLALATTNIFGIHTPAIFALDALYAQYWSQDGEAMNLYATMAAAAARLTPFSPPAPIANPGALARLYELIGSVSETVGSFAAPATKNLPSKLWTLLTKGTYPLTAARISSIPVEYVLAFVEGSNMGQMMGNLAMRSLTPTLKGPLELLPNAVRPAVSATLGNADTIGGLSVPPSWVADKSITPLAKAVPTSAPGGPSGTSWAQLGLASLAGGAVGAVAARTRSGVILRSPAAG.

The tract at residues 6-159 (FPPEFNSLNI…LYATMAAAAA (154 aa)) is PPE.

The protein belongs to the mycobacterial PPE family. In terms of assembly, interacts with LRR motifs 15-20 of host Toll-like receptor 2 (TLR2).

The protein localises to the secreted. The protein resides in the cell wall. It localises to the cell surface. Its function is as follows. Induces pro-inflammatory responses. Induces host TLR1/2 heterodimerization, which causes an increased recruitment of IRAK1, MYD88, and protein kinase C epsilon (PRKCE) to the downstream TLR-signaling complex that translocates PRKCE into the nucleus in an IRAK1-dependent manner. PRKCE-mediated phosphorylation allowed the nuclear IRAK3 to be exported to the cytoplasm, leading to increased activation of ERK1/2, stabilization of MAPK phosphatase 1 (MKP1), and induction of TNF-alpha with concomitant down-regulation of MAP kinase p38. During M.tuberculosis and HIV-1 co-infection, can stimulate transcription from the long terminal repeat (LTR) of HIV-1 in monocyte/macrophage cells. Interaction with human TLR2 activates the NF-kappa-B transcription factor, which binds to the promoter region of the HIV-1 and induces HIV-1 gene expression. The sequence is that of PPE family protein PPE17 (PPE17) from Mycobacterium tuberculosis (strain ATCC 25618 / H37Rv).